Here is a 230-residue protein sequence, read N- to C-terminus: Somatolactin (230 aa).

The signal sequence occupies residues 1–23; sequence MNMMTVKQGVWAALLWPYLLAAS. 3 disulfide bridges follow: Cys-28-Cys-38, Cys-88-Cys-204, and Cys-221-Cys-229. Asn-137 and Asn-144 each carry an N-linked (GlcNAc...) asparagine glycan.

The protein belongs to the somatotropin/prolactin family.

The protein resides in the secreted. This Hippoglossus hippoglossus (Atlantic halibut) protein is Somatolactin.